Consider the following 224-residue polypeptide: Synaptogyrin-2 (224 aa).

The residue at position 1 (Met1) is an N-acetylmethionine. Ser3 bears the Phosphoserine mark. Residues 20-171 (FLTQPQVVAR…LASLAYQRYK (152 aa)) form the MARVEL domain. Transmembrane regions (helical) follow at residues 26–46 (VVAR…IYGE), 73–93 (AIGV…AYFP), 105–125 (VIGD…GFCF), and 147–167 (AAIT…SLAY).

It belongs to the synaptogyrin family. (Microbial infection) Interacts with SFTS phlebovirus protein NSs; may be involved in virus replication. Post-translationally, may be tyrosine phosphorylated by Src. In terms of tissue distribution, ubiquitous; low expression in brain.

The protein localises to the cytoplasmic vesicle membrane. It localises to the cytoplasmic vesicle. It is found in the secretory vesicle. Its subcellular location is the synaptic vesicle membrane. The protein resides in the lipid droplet. Its function is as follows. May play a role in regulated exocytosis. In neuronal cells, modulates the localization of synaptophysin/SYP into synaptic-like microvesicles and may therefore play a role in the formation and/or the maturation of this vesicles. May also play a role in GLUT4 storage and transport to the plasma membrane. Functionally, (Microbial infection) May play a role in the assembly of cytoplasmic inclusion bodies required for SFTS phlebovirus replication. This chain is Synaptogyrin-2, found in Homo sapiens (Human).